A 424-amino-acid chain; its full sequence is Tubulin-specific chaperone cofactor E-like protein (424 aa).

Serine 18 and serine 41 each carry phosphoserine. LRR repeat units lie at residues 73-98 (CAHV…IVSN), 99-123 (VPQL…TCAG), 124-147 (SFSG…HTIL), 150-172 (LPDL…PSVC), 173-197 (CHSL…KLGV), 199-224 (FPSL…SLAR), and 226-250 (FPNL…KLNS). The LRRCT domain occupies 262–303 (IPLLQPYTTEERRKLVVARLPSVSKLNGSVVTDGEREDSERF). The Ubiquitin-like domain occupies 334 to 424 (AEVDLRPQSS…DKIFVESKTK (91 aa)). Positions 350–375 (FNDQVEEVSIRLDQTVAELKRQLKTL) form a coiled coil.

The protein resides in the cytoplasm. The protein localises to the cytoskeleton. Functionally, acts as a regulator of tubulin stability. This is Tubulin-specific chaperone cofactor E-like protein (Tbcel) from Rattus norvegicus (Rat).